Consider the following 133-residue polypeptide: S-adenosylmethionine decarboxylase proenzyme (133 aa).

The Schiff-base intermediate with substrate; via pyruvic acid role is filled by S65. S65 carries the pyruvic acid (Ser); by autocatalysis modification. H70 acts as the Proton acceptor; for processing activity in catalysis. C85 serves as the catalytic Proton donor; for catalytic activity.

Belongs to the prokaryotic AdoMetDC family. Type 1 subfamily. As to quaternary structure, heterotetramer of two alpha and two beta chains arranged as a dimer of alpha/beta heterodimers. Requires pyruvate as cofactor. Post-translationally, is synthesized initially as an inactive proenzyme. Formation of the active enzyme involves a self-maturation process in which the active site pyruvoyl group is generated from an internal serine residue via an autocatalytic post-translational modification. Two non-identical subunits are generated from the proenzyme in this reaction, and the pyruvate is formed at the N-terminus of the alpha chain, which is derived from the carboxyl end of the proenzyme. The post-translation cleavage follows an unusual pathway, termed non-hydrolytic serinolysis, in which the side chain hydroxyl group of the serine supplies its oxygen atom to form the C-terminus of the beta chain, while the remainder of the serine residue undergoes an oxidative deamination to produce ammonia and the pyruvoyl group blocking the N-terminus of the alpha chain.

The catalysed reaction is S-adenosyl-L-methionine + H(+) = S-adenosyl 3-(methylsulfanyl)propylamine + CO2. The protein operates within amine and polyamine biosynthesis; S-adenosylmethioninamine biosynthesis; S-adenosylmethioninamine from S-adenosyl-L-methionine: step 1/1. Catalyzes the decarboxylation of S-adenosylmethionine to S-adenosylmethioninamine (dcAdoMet), the propylamine donor required for the synthesis of the polyamines spermine and spermidine from the diamine putrescine. In Brevibacillus brevis (strain 47 / JCM 6285 / NBRC 100599), this protein is S-adenosylmethionine decarboxylase proenzyme.